A 472-amino-acid chain; its full sequence is uncharacterized protein (472 aa).

It belongs to the IIV-6 198R family.

This is an uncharacterized protein from Acheta domesticus (House cricket).